The sequence spans 932 residues: Protocadherin gamma-A3 (932 aa).

A signal peptide spans 1–29 (MTNCLSFRNGRGLALLCALLGTLCETGSG). 6 consecutive Cadherin domains span residues 30–133 (QIRY…APNF), 134–242 (PTEE…PPMF), 243–347 (TQPE…APEI), 348–452 (TITS…PPTF), 453–562 (PHLS…APEI), and 570–682 (DGST…EPSA). Topologically, residues 30–692 (QIRYSVSEEL…KPNDSDLTLY (663 aa)) are extracellular. N265, N419, and N545 each carry an N-linked (GlcNAc...) asparagine glycan. A glycan (N-linked (GlcNAc...) asparagine) is linked at N685. A helical membrane pass occupies residues 693 to 713 (LVVAVAAVSCVFLAFVIVLLA). The Cytoplasmic segment spans residues 714-932 (LRLRRWHKSR…KKKSGKKEKK (219 aa)). Disordered stretches follow at residues 805–841 (NLLQQAPPNTDWRFSQAQRPGTSGSQNGDDTGTWPNN) and 902–932 (ATLTNAAGKRDGKAPAGGNGNKKKSGKKEKK). The segment covering 922-932 (NKKKSGKKEKK) has biased composition (basic residues).

It localises to the cell membrane. Functionally, potential calcium-dependent cell-adhesion protein. May be involved in the establishment and maintenance of specific neuronal connections in the brain. This chain is Protocadherin gamma-A3 (PCDHGA3), found in Homo sapiens (Human).